A 503-amino-acid chain; its full sequence is Structure-specific endonuclease subunit EME2 (503 aa).

3 stretches are compositionally biased toward basic and acidic residues: residues 1–10 (METKQERETG), 38–48 (ETNKPQTESRK), and 112–135 (AEEK…LEKI). Residues 1–135 (METKQERETG…KAQKKELEKI (135 aa)) form a disordered region. The interval 70-366 (QPDVEEKTKN…RPFRKHWEAQ (297 aa)) is nuclease-like domain; forms the post-nick DNA binding interface and is involved in DNA recognition and bending. Residues 103–151 (EQVAAEQEQAEEKKRQRELKRQEKAQKKELEKIERERRKETNLALKLLR) are a coiled coil. The segment at 388–503 (GLPLTWRRQI…NPELVLDLNS (116 aa)) is helix-hairpin-helix (2HhH); forms the pre-nick DNA binding interface and is involved in DNA recognition and bending.

The protein belongs to the EME1/MMS4 family. As to quaternary structure, part of the heterodimeric MUS81-EME2 complex; the complex forms specifically during the DNA replication phase of the cell cycle.

The protein localises to the nucleus. Non-catalytic subunit of the structure-specific, heterodimeric DNA endonuclease MUS81-EME2 which is involved in the maintenance of genome stability. In the complex, EME2 is required for DNA cleavage, participating in DNA recognition and bending. MUS81-EME2 cleaves 3'-flaps and nicked Holliday junctions, and exhibit limited endonuclease activity with 5' flaps and nicked double-stranded DNAs. MUS81-EME2 which is active during the replication of DNA is more specifically involved in replication fork processing. Replication forks frequently encounter obstacles to their passage, including DNA base lesions, DNA interstrand cross-links, difficult-to-replicate sequences, transcription bubbles, or tightly bound proteins. One mechanism for the restart of a stalled replication fork involves nucleolytic cleavage mediated by the MUS81-EME2 endonuclease. By acting upon the stalled fork, MUS81-EME2 generates a DNA double-strand break (DSB) that can be repaired by homologous recombination, leading to the restoration of an active fork. MUS81-EME2 could also function in telomere maintenance. This Xenopus tropicalis (Western clawed frog) protein is Structure-specific endonuclease subunit EME2 (eme2).